A 69-amino-acid polypeptide reads, in one-letter code: uncharacterized protein (69 aa).

Residues 6–56 (SEECTPAKKKYDACFNDWYANKFLKGDLHNRDCDELFAEYKSCLLKALKTK) enclose the CHCH domain. 2 consecutive short sequence motifs (cx9C motif) follow at residues 9 to 19 (CTPAKKKYDAC) and 38 to 48 (CDELFAEYKSC). 2 disulfide bridges follow: cysteine 9/cysteine 48 and cysteine 19/cysteine 38.

This sequence belongs to the TRIAP1/MDM35 family.

This is an uncharacterized protein from Schizosaccharomyces pombe (strain 972 / ATCC 24843) (Fission yeast).